Here is a 275-residue protein sequence, read N- to C-terminus: ATP synthase subunit delta (275 aa).

It belongs to the ATPase delta chain family. F-type ATPases have 2 components, F(1) - the catalytic core - and F(0) - the membrane proton channel. F(1) has five subunits: alpha(3), beta(3), gamma(1), delta(1), epsilon(1). F(0) has three main subunits: a(1), b(2) and c(10-14). The alpha and beta chains form an alternating ring which encloses part of the gamma chain. F(1) is attached to F(0) by a central stalk formed by the gamma and epsilon chains, while a peripheral stalk is formed by the delta and b chains.

The protein resides in the cell membrane. Its function is as follows. F(1)F(0) ATP synthase produces ATP from ADP in the presence of a proton or sodium gradient. F-type ATPases consist of two structural domains, F(1) containing the extramembraneous catalytic core and F(0) containing the membrane proton channel, linked together by a central stalk and a peripheral stalk. During catalysis, ATP synthesis in the catalytic domain of F(1) is coupled via a rotary mechanism of the central stalk subunits to proton translocation. In terms of biological role, this protein is part of the stalk that links CF(0) to CF(1). It either transmits conformational changes from CF(0) to CF(1) or is implicated in proton conduction. This is ATP synthase subunit delta from Nocardioides sp. (strain ATCC BAA-499 / JS614).